Here is a 209-residue protein sequence, read N- to C-terminus: Thymidylate kinase (209 aa).

ATP is bound at residue 10–17 (GLDGAGKS).

The protein belongs to the thymidylate kinase family.

It carries out the reaction dTMP + ATP = dTDP + ADP. Its function is as follows. Phosphorylation of dTMP to form dTDP in both de novo and salvage pathways of dTTP synthesis. In Francisella tularensis subsp. tularensis (strain FSC 198), this protein is Thymidylate kinase.